A 100-amino-acid polypeptide reads, in one-letter code: NADH-quinone oxidoreductase subunit K (100 aa).

3 helical membrane passes run 2–22 (IGLS…LMGV), 29–49 (LMLF…FAAI), and 63–83 (FFII…LIVL).

This sequence belongs to the complex I subunit 4L family. NDH-1 is composed of 14 different subunits. Subunits NuoA, H, J, K, L, M, N constitute the membrane sector of the complex.

The protein localises to the cell inner membrane. The catalysed reaction is a quinone + NADH + 5 H(+)(in) = a quinol + NAD(+) + 4 H(+)(out). In terms of biological role, NDH-1 shuttles electrons from NADH, via FMN and iron-sulfur (Fe-S) centers, to quinones in the respiratory chain. The immediate electron acceptor for the enzyme in this species is believed to be ubiquinone. Couples the redox reaction to proton translocation (for every two electrons transferred, four hydrogen ions are translocated across the cytoplasmic membrane), and thus conserves the redox energy in a proton gradient. This chain is NADH-quinone oxidoreductase subunit K, found in Sulfurovum sp. (strain NBC37-1).